The chain runs to 108 residues: Peptidyl-prolyl cis-trans isomerase FKBP1A (108 aa).

In terms of domain architecture, PPIase FKBP-type spans 20 to 108 (GQTCVVHYTG…VFDVELLKLE (89 aa)). At K53 the chain carries N6-acetyllysine; alternate. K53 carries the N6-succinyllysine; alternate modification.

It belongs to the FKBP-type PPIase family. FKBP1 subfamily. As to quaternary structure, interacts with TGFBR1; prevents TGFBR1 phosphorylation by TGFBR2 and stabilizes it in the inactive conformation. Interacts with ACVR1B and SMAD7. Identified in a complex composed of RYR1, PDE4D, PKA, FKBP1A and protein phosphatase 1 (PP1). Interacts directly with RYR2 and RYR3. Interacts directly with RYR1. Interacts with GLMN; rapamycin and FK506 abolish the interaction with GLMN in a dose dependent manner.

It is found in the cytoplasm. The protein resides in the cytosol. Its subcellular location is the sarcoplasmic reticulum membrane. It catalyses the reaction [protein]-peptidylproline (omega=180) = [protein]-peptidylproline (omega=0). Inhibited by both FK506 and rapamycin. Keeps in an inactive conformation TGFBR1, the TGF-beta type I serine/threonine kinase receptor, preventing TGF-beta receptor activation in absence of ligand. Recruits SMAD7 to ACVR1B which prevents the association of SMAD2 and SMAD3 with the activin receptor complex, thereby blocking the activin signal. May modulate the RYR1 calcium channel activity. PPIases accelerate the folding of proteins. It catalyzes the cis-trans isomerization of proline imidic peptide bonds in oligopeptides. The sequence is that of Peptidyl-prolyl cis-trans isomerase FKBP1A (Fkbp1a) from Mus musculus (Mouse).